The sequence spans 256 residues: Pimeloyl-[acyl-carrier protein] methyl ester esterase (256 aa).

The 228-residue stretch at 15 to 242 folds into the AB hydrolase-1 domain; the sequence is HLVLLHGWGL…AAHAPFISHP (228 aa). Substrate contacts are provided by residues tryptophan 22, 82–83, and 143–147; these read SL and FLALQ. The active-site Nucleophile is the serine 82. Catalysis depends on residues aspartate 207 and histidine 235. Histidine 235 provides a ligand contact to substrate.

Belongs to the AB hydrolase superfamily. Carboxylesterase BioH family. In terms of assembly, monomer.

Its subcellular location is the cytoplasm. It carries out the reaction 6-carboxyhexanoyl-[ACP] methyl ester + H2O = 6-carboxyhexanoyl-[ACP] + methanol + H(+). The protein operates within cofactor biosynthesis; biotin biosynthesis. In terms of biological role, the physiological role of BioH is to remove the methyl group introduced by BioC when the pimeloyl moiety is complete. It allows to synthesize pimeloyl-ACP via the fatty acid synthetic pathway through the hydrolysis of the ester bonds of pimeloyl-ACP esters. In Salmonella newport (strain SL254), this protein is Pimeloyl-[acyl-carrier protein] methyl ester esterase.